The following is a 1242-amino-acid chain: von Willebrand factor A domain-containing protein 5B2 (1242 aa).

One can recognise a VIT domain in the interval 1–138 (MPGLYCPSSW…TMTVTLHSSR (138 aa)). Residues 354 to 527 (ELLFLLDSSS…KALEPALSDI (174 aa)) form the VWFA domain. 6 disordered regions span residues 569–650 (SRPP…SDTA), 670–726 (CSAS…CPLP), 751–794 (LAGR…GQGL), 957–976 (CSSEPAEPPGTPPASHSHLD), 987–1055 (KGLQ…GSDH), and 1118–1159 (QGDS…GLGG). Residues 588 to 604 (PSPEEAPSAASPGTEPT) are compositionally biased toward low complexity. Residues 605–619 (GTSEPLGTGTVSAEL) show a composition bias toward polar residues. Residues 681–700 (TGSSESPGSQGPGSPEGSAP) are compositionally biased toward low complexity. The segment covering 1125-1138 (SCSPSPSSGSEGPG) has biased composition (low complexity).

This is von Willebrand factor A domain-containing protein 5B2 (VWA5B2) from Homo sapiens (Human).